Consider the following 61-residue polypeptide: Small ribosomal subunit protein uS14 (61 aa).

Cys-24, Cys-27, Cys-40, and Cys-43 together coordinate Zn(2+).

It belongs to the universal ribosomal protein uS14 family. Zinc-binding uS14 subfamily. Part of the 30S ribosomal subunit. Contacts proteins S3 and S10. Requires Zn(2+) as cofactor.

Its function is as follows. Binds 16S rRNA, required for the assembly of 30S particles and may also be responsible for determining the conformation of the 16S rRNA at the A site. This Alkaliphilus oremlandii (strain OhILAs) (Clostridium oremlandii (strain OhILAs)) protein is Small ribosomal subunit protein uS14.